The sequence spans 507 residues: MFS-type transporter acdC (507 aa).

The segment at 1–50 (MSPNAPAVDIGAAPSLDTPEGDTKQPAEDHVEKDSNLVDWDGPDDPEHPQ) is disordered. The segment covering 21-36 (GDTKQPAEDHVEKDSN) has biased composition (basic and acidic residues). The N-linked (GlcNAc...) asparagine glycan is linked to asparagine 51. The chain crosses the membrane as a helical span at residues 58-78 (WGITFSLASMTMWITFSSSVL). Residue asparagine 90 is glycosylated (N-linked (GlcNAc...) asparagine). Transmembrane regions (helical) follow at residues 95–115 (VMPL…LCWA), 125–145 (LPTF…AVAP), 155–175 (FFVG…MADI), 186–206 (PFFF…GGFI), and 215–235 (WTAW…LLIV). N-linked (GlcNAc...) asparagine glycosylation occurs at asparagine 257. A run of 6 helical transmembrane segments spans residues 290–310 (PILI…YLFL), 328–348 (IAGL…GIII), 371–391 (LVEM…FGWA), 395–415 (HWMV…VLFM), 442–462 (FLGG…GVDW), and 466–486 (ILGF…IFGA).

It belongs to the major facilitator superfamily. CAR1 family.

It is found in the membrane. In terms of biological role, MFS-type transporter; part of the gene cluster that mediates the biosynthesis of aspcandine, a pyrrolobenzazepine alkaloid. The polypeptide is MFS-type transporter acdC (Aspergillus candidus).